The chain runs to 1125 residues: tRNA (34-2'-O)-methyltransferase regulator WDR6 (1125 aa).

The residue at position 1 (methionine 1) is an N-acetylmethionine. 19 WD repeats span residues 53–97, 105–143, 147–189, 200–238, 247–285, 289–327, 335–376, 381–422, 425–470, 476–520, 559–598, 604–642, 645–684, 739–785, 848–897, 905–950, 974–1016, 1040–1077, and 1083–1125; these read VKRV…VVKV, RELW…LYDP, CMLQ…IWYP, APDR…LWKV, RVQN…VWSH, ILQA…LWHL, LGVS…LYDL, WEQL…VVPI, PTAA…ISAA, IFVK…LFPV, PVST…FVHG, VLRQ…VWSP, HEKL…LYRA, LIDI…VWAV, RNKH…LFLL, HLLA…FWDL, GTPS…VFTL, EEYS…FWRL, and TFMN…NWYD.

This sequence belongs to the WD repeat WDR6 family. As to quaternary structure, interacts with FTSJ1; the interaction is direct, and required for 2'-O-methylation of position 34 in substrate tRNAs. Interacts with IRS4. Interacts with STK11/LKB1.

It is found in the cytoplasm. Together with methyltransferase FTSJ1, methylates the 2'-O-ribose of nucleotides at position 34 of the tRNA anticodon loop of substrate tRNAs. Required for the correct positioning of the substrate tRNA for methylation. Required to suppress amino acid starvation-induced autophagy. Enhances the STK11/LKB1-induced cell growth suppression activity. In Mus musculus (Mouse), this protein is tRNA (34-2'-O)-methyltransferase regulator WDR6 (Wdr6).